The sequence spans 269 residues: Shikimate dehydrogenase (NADP(+)) (269 aa).

Shikimate-binding positions include 17-19 and Thr-64; that span reads SKS. The active-site Proton acceptor is Lys-68. Asp-80 provides a ligand contact to NADP(+). Residues Asn-89 and Asp-105 each contribute to the shikimate site. NADP(+) contacts are provided by residues 130–134, 154–159, and Met-213; these read GAGGA and NRTRAK. Tyr-215 is a shikimate binding site. NADP(+) is bound at residue Gly-237.

Belongs to the shikimate dehydrogenase family. In terms of assembly, homodimer.

The catalysed reaction is shikimate + NADP(+) = 3-dehydroshikimate + NADPH + H(+). Its pathway is metabolic intermediate biosynthesis; chorismate biosynthesis; chorismate from D-erythrose 4-phosphate and phosphoenolpyruvate: step 4/7. Its function is as follows. Involved in the biosynthesis of the chorismate, which leads to the biosynthesis of aromatic amino acids. Catalyzes the reversible NADPH linked reduction of 3-dehydroshikimate (DHSA) to yield shikimate (SA). In Neisseria meningitidis serogroup C (strain 053442), this protein is Shikimate dehydrogenase (NADP(+)).